Consider the following 240-residue polypeptide: MAQKINPISFRLGTTQVWNSTLQIYGKSFKNYFSIVNNQLNLQNFIIRYVKLNGFQINYYEWKMHKNKTFLSIYFSPSFNNGKLNLTNFKQLSNLLSNWCSNKFIFHFYLNSKWSLTSNFLTLYTKYLVEQKLGPKKIIVILCNFLQDQLNSSKVMHFKFGFIETKLVGFKIRLVGRFDSSNQMAKSFDQTIGTLSLTNLSSFVEYSNIEIHTKLGTCGVQVWLFFTPKKFINGYNQKNS.

It belongs to the universal ribosomal protein uS3 family.

The protein resides in the mitochondrion. In Chondrus crispus (Carrageen Irish moss), this protein is Small ribosomal subunit protein uS3m (RPS3).